Consider the following 186-residue polypeptide: ATP synthase subunit delta, cyanelle (186 aa).

It belongs to the ATPase delta chain family. F-type ATPases have 2 components, F(1) - the catalytic core - and F(0) - the membrane proton channel. F(1) has five subunits: alpha(3), beta(3), gamma(1), delta(1), epsilon(1). CF(0) has four main subunits: a(1), b(1), b'(1) and c(10-14). The alpha and beta chains form an alternating ring which encloses part of the gamma chain. F(1) is attached to F(0) by a central stalk formed by the gamma and epsilon chains, while a peripheral stalk is formed by the delta, b and b' chains.

The protein localises to the plastid. It localises to the cyanelle thylakoid membrane. F(1)F(0) ATP synthase produces ATP from ADP in the presence of a proton or sodium gradient. F-type ATPases consist of two structural domains, F(1) containing the extramembraneous catalytic core and F(0) containing the membrane proton channel, linked together by a central stalk and a peripheral stalk. During catalysis, ATP synthesis in the catalytic domain of F(1) is coupled via a rotary mechanism of the central stalk subunits to proton translocation. Its function is as follows. This protein is part of the stalk that links CF(0) to CF(1). It either transmits conformational changes from CF(0) to CF(1) or is implicated in proton conduction. The protein is ATP synthase subunit delta, cyanelle of Cyanophora paradoxa.